The sequence spans 515 residues: MVQPYKHEPLTDFTVEANRKAFEEALKKVEAELGKDYPLIIGGERVTTDEKIVSINPANKTEVIGRVSKANKELAEKAMKVADEAFKWWSKTKPEARADILFRAAAIVRRRKHEFSALMVKEAGKPWKEADADTAEAIDFMEYYARQMLKLKDGVPVESRPGETNRFFYIPLGVGVVISPWNFPFAIMAGTTVASLVTGNTVLLKPASATPVVAYKFAEVLEEAGLPAGVLNYIPGSGAEVGDYLVDHPRTRFISFTGSRDVGIRIYERAAKVHPGQIWLKRVIAEMGGKDGIVVDKEADLELAAQSIVASAFGFSGQKCSACSRAIIVEDVYDQVLNRVVELTKQLKVGDPADQSTFMGPVIDQSAYNKIMEYIEIGKKEGRLMTGGEGDDSKGFFIQPTVFADVDPNARIMQEEIFGPVVAFTKAKDFDHALEIANNTEYGLTGAVISRNRANLEKAREEFHVGNLYFNRGCTGAIVGYQPFGGFNMSGTDSKAGGPDYLILHMQAKTVSEMF.

Residues E286 and C320 contribute to the active site.

Belongs to the aldehyde dehydrogenase family. RocA subfamily.

The enzyme catalyses L-glutamate 5-semialdehyde + NAD(+) + H2O = L-glutamate + NADH + 2 H(+). The protein operates within amino-acid degradation; L-proline degradation into L-glutamate; L-glutamate from L-proline: step 2/2. The chain is 1-pyrroline-5-carboxylate dehydrogenase from Geobacillus sp. (strain WCH70).